Reading from the N-terminus, the 459-residue chain is Cysteine--tRNA ligase (459 aa).

Zn(2+) is bound at residue cysteine 28. A 'HIGH' region motif is present at residues 30 to 40 (ITIYDLCHIGH). Positions 209, 234, and 238 each coordinate Zn(2+). Positions 266–270 (KMSKS) match the 'KMSKS' region motif. An ATP-binding site is contributed by lysine 269.

The protein belongs to the class-I aminoacyl-tRNA synthetase family. Monomer. The cofactor is Zn(2+).

Its subcellular location is the cytoplasm. It carries out the reaction tRNA(Cys) + L-cysteine + ATP = L-cysteinyl-tRNA(Cys) + AMP + diphosphate. This Shewanella denitrificans (strain OS217 / ATCC BAA-1090 / DSM 15013) protein is Cysteine--tRNA ligase.